Reading from the N-terminus, the 510-residue chain is Maturase K (510 aa).

The protein belongs to the intron maturase 2 family. MatK subfamily.

The protein resides in the plastid. The protein localises to the chloroplast. In terms of biological role, usually encoded in the trnK tRNA gene intron. Probably assists in splicing its own and other chloroplast group II introns. The sequence is that of Maturase K from Anomochloa marantoidea (Herbaceous bamboo).